Here is a 704-residue protein sequence, read N- to C-terminus: ATP-dependent zinc metalloprotease FTSH 5, chloroplastic (704 aa).

Residues 1-58 (MATTSSNPLLLSSNFLGSQIIISAPTPKTTTKSLPFSVISRKRYQISQSEKLMKSLPS) constitute a chloroplast transit peptide. The N-terminal 18 residues, 59–76 (QAALAALLFSSSSPQALA), are a transit peptide targeting the thylakoid. The chain crosses the membrane as a helical span at residues 193-213 (FDFIGNLLFPLLAFGGLFYLF). 290-297 (GPPGTGKT) is a binding site for ATP. His512 provides a ligand contact to Zn(2+). The active site involves Glu513. His516 and Asp593 together coordinate Zn(2+).

It in the N-terminal section; belongs to the AAA ATPase family. In the C-terminal section; belongs to the peptidase M41 family. In terms of assembly, heterohexamers with FTSH1, FTSH2 and FTSH8. Requires Zn(2+) as cofactor. Ubiquitous.

The protein resides in the plastid. It localises to the chloroplast thylakoid membrane. Functionally, part of a complex that function as an ATP-dependent zinc metallopeptidase. Involved in the thylakoid formation and in the removal of damaged D1 in the photosystem II, preventing cell death under high-intensity light conditions. Not involved in the degradation of the light-harvesting complex of photosystem II (LHC II) or in thermotolerance. This chain is ATP-dependent zinc metalloprotease FTSH 5, chloroplastic (FTSH5), found in Arabidopsis thaliana (Mouse-ear cress).